The primary structure comprises 42 residues: Potassium channel gamma toxin gamma-KTx 1.9 (42 aa).

4 cysteine pairs are disulfide-bonded: Cys-5-Cys-23, Cys-11-Cys-34, Cys-20-Cys-39, and Cys-24-Cys-41.

Belongs to the ergtoxin family. Gamma-KTx 1 subfamily. Expressed by the venom gland.

It is found in the secreted. Blocks human voltage-gated potassium channel Kv11.1/KCNH2/ERG1 (IC(50)=16.9 nM). This Centruroides tecomanus (Scorpion) protein is Potassium channel gamma toxin gamma-KTx 1.9.